A 348-amino-acid chain; its full sequence is Rhodopsin (348 aa).

Met1 is subject to N-acetylmethionine. Topologically, residues 1–36 (MNGTEGPNFYVPFSNKTGVVRSPFEFPQYYLAEPWQ) are extracellular. N-linked (GlcNAc...) asparagine glycans are attached at residues Asn2 and Asn15. A helical membrane pass occupies residues 37 to 61 (FSMLAAYMFLLIVLGFPINFLTLYV). The Cytoplasmic portion of the chain corresponds to 62 to 73 (TVQHKKLRTPLN). A helical membrane pass occupies residues 74 to 96 (YILLNLAVADLFMVFGGFTTTLY). Topologically, residues 97 to 110 (TSLHGYFVFGPTGC) are extracellular. A disulfide bridge connects residues Cys110 and Cys187. A helical transmembrane segment spans residues 111-133 (NLEGFFATLGGEIALWSLVVLAI). The short motif at 134-136 (ERY) is the 'Ionic lock' involved in activated form stabilization element. The Cytoplasmic portion of the chain corresponds to 134–152 (ERYVVVCKPMSNFRFGENH). Residues 153-173 (AIMGVGFTWVMALACAAPPLV) traverse the membrane as a helical segment. The Extracellular segment spans residues 174–202 (GWSRYIPEGMQCSCGIDYYTLKPEVNNES). Position 201 (Glu201) interacts with Zn(2+). The helical transmembrane segment at 203-224 (FVIYMFVVHFTIPMIVIFFCYG) threads the bilayer. The Cytoplasmic segment spans residues 225–252 (QLVFTVKEAAAQQQESATTQKAEKEVTR). The chain crosses the membrane as a helical span at residues 253–274 (MVIIMVIAFLICWVPYASVAFY). Topologically, residues 275–286 (IFTHQGSNFGPI) are extracellular. Gln279 contributes to the Zn(2+) binding site. The chain crosses the membrane as a helical span at residues 287–308 (FMTLPAFFAKAASIYNPVIYIM). The residue at position 296 (Lys296) is an N6-(retinylidene)lysine. Over 309 to 348 (MNKQFRTCMITTLCCGKNPLGDDEVSASASKTETSQVAPA) the chain is Cytoplasmic. Residues Cys322 and Cys323 are each lipidated (S-palmitoyl cysteine). The interaction with SAG stretch occupies residues 330-348 (DDEVSASASKTETSQVAPA). Phosphoserine is present on residues Ser334 and Ser338. Phosphothreonine occurs at positions 340 and 342. A Phosphoserine modification is found at Ser343.

This sequence belongs to the G-protein coupled receptor 1 family. Opsin subfamily. Homodimer. May form a complex composed of RHO, GRK1 and RCVRN in a Ca(2+)-dependent manner; RCVRN prevents the interaction between GRK1 and RHO. Interacts with GRK1. Interacts (phosphorylated form) with SAG. Interacts with GNAT1. Interacts with GNAT3. SAG and G-proteins compete for a common binding site. Interacts with PRCD; the interaction promotes PRCD stability. Forms a complex with ASAP1 and ARF4. Forms a complex with ASAP1, RAB11A, Rabin8/RAB3IP, ARF4 and RAB11FIP3; the complex regulates Golgi-to-cilia rhodopsin/RHO transport in photoreceptors. In terms of processing, phosphorylated on some or all of the serine and threonine residues present in the C-terminal region. Post-translationally, contains one covalently linked retinal chromophore. Upon light absorption, the covalently bound 11-cis-retinal is converted to all-trans-retinal. After hydrolysis of the Schiff base and release of the covalently bound all-trans-retinal, active rhodopsin is regenerated by binding of a fresh molecule of 11-cis-retinal.

Its subcellular location is the membrane. It is found in the cell projection. The protein localises to the cilium. The protein resides in the photoreceptor outer segment. Functionally, photoreceptor required for image-forming vision at low light intensity. Required for photoreceptor cell viability after birth. Light-induced isomerization of 11-cis to all-trans retinal triggers a conformational change that activates signaling via G-proteins. Subsequent receptor phosphorylation mediates displacement of the bound G-protein alpha subunit by the arrestin SAG and terminates signaling. The protein is Rhodopsin (RHO) of Phoca vitulina (Harbor seal).